We begin with the raw amino-acid sequence, 484 residues long: Probable cobyric acid synthase (484 aa).

A GATase cobBQ-type domain is found at 247 to 433 (ELHIQIVKLP…LHGIFHNFAF (187 aa)). The active-site Nucleophile is Cys-325. Residue His-425 is part of the active site.

It belongs to the CobB/CobQ family. CobQ subfamily.

It functions in the pathway cofactor biosynthesis; adenosylcobalamin biosynthesis. In terms of biological role, catalyzes amidations at positions B, D, E, and G on adenosylcobyrinic A,C-diamide. NH(2) groups are provided by glutamine, and one molecule of ATP is hydrogenolyzed for each amidation. The sequence is that of Probable cobyric acid synthase from Thermococcus onnurineus (strain NA1).